A 424-amino-acid polypeptide reads, in one-letter code: Enolase (424 aa).

Residue glutamine 162 participates in (2R)-2-phosphoglycerate binding. Residue glutamate 204 is the Proton donor of the active site. Mg(2+)-binding residues include aspartate 241, glutamate 284, and aspartate 311. 4 residues coordinate (2R)-2-phosphoglycerate: lysine 336, arginine 365, serine 366, and lysine 387. Lysine 336 serves as the catalytic Proton acceptor.

This sequence belongs to the enolase family. It depends on Mg(2+) as a cofactor.

It localises to the cytoplasm. The protein resides in the secreted. Its subcellular location is the cell surface. The catalysed reaction is (2R)-2-phosphoglycerate = phosphoenolpyruvate + H2O. Its pathway is carbohydrate degradation; glycolysis; pyruvate from D-glyceraldehyde 3-phosphate: step 4/5. Catalyzes the reversible conversion of 2-phosphoglycerate (2-PG) into phosphoenolpyruvate (PEP). It is essential for the degradation of carbohydrates via glycolysis. The chain is Enolase from Chelativorans sp. (strain BNC1).